A 412-amino-acid polypeptide reads, in one-letter code: Multifunctional CCA protein (412 aa).

Gly8 and Arg11 together coordinate ATP. 2 residues coordinate CTP: Gly8 and Arg11. Residues Asp21 and Asp23 each coordinate Mg(2+). Arg91, Arg137, and Arg140 together coordinate ATP. Arg91, Arg137, and Arg140 together coordinate CTP. The HD domain maps to 228 to 329; it reads TGIHTLMTLS…VKLFDSIDAW (102 aa).

This sequence belongs to the tRNA nucleotidyltransferase/poly(A) polymerase family. Bacterial CCA-adding enzyme type 1 subfamily. Monomer. Can also form homodimers and oligomers. Requires Mg(2+) as cofactor. Ni(2+) is required as a cofactor.

It carries out the reaction a tRNA precursor + 2 CTP + ATP = a tRNA with a 3' CCA end + 3 diphosphate. The enzyme catalyses a tRNA with a 3' CCA end + 2 CTP + ATP = a tRNA with a 3' CCACCA end + 3 diphosphate. In terms of biological role, catalyzes the addition and repair of the essential 3'-terminal CCA sequence in tRNAs without using a nucleic acid template. Adds these three nucleotides in the order of C, C, and A to the tRNA nucleotide-73, using CTP and ATP as substrates and producing inorganic pyrophosphate. tRNA 3'-terminal CCA addition is required both for tRNA processing and repair. Also involved in tRNA surveillance by mediating tandem CCA addition to generate a CCACCA at the 3' terminus of unstable tRNAs. While stable tRNAs receive only 3'-terminal CCA, unstable tRNAs are marked with CCACCA and rapidly degraded. The protein is Multifunctional CCA protein of Escherichia coli (strain K12 / MC4100 / BW2952).